The sequence spans 581 residues: Proline--tRNA ligase (581 aa).

This sequence belongs to the class-II aminoacyl-tRNA synthetase family. ProS type 1 subfamily. As to quaternary structure, homodimer.

It is found in the cytoplasm. The catalysed reaction is tRNA(Pro) + L-proline + ATP = L-prolyl-tRNA(Pro) + AMP + diphosphate. In terms of biological role, catalyzes the attachment of proline to tRNA(Pro) in a two-step reaction: proline is first activated by ATP to form Pro-AMP and then transferred to the acceptor end of tRNA(Pro). As ProRS can inadvertently accommodate and process non-cognate amino acids such as alanine and cysteine, to avoid such errors it has two additional distinct editing activities against alanine. One activity is designated as 'pretransfer' editing and involves the tRNA(Pro)-independent hydrolysis of activated Ala-AMP. The other activity is designated 'posttransfer' editing and involves deacylation of mischarged Ala-tRNA(Pro). The misacylated Cys-tRNA(Pro) is not edited by ProRS. In Chlamydia trachomatis serovar D (strain ATCC VR-885 / DSM 19411 / UW-3/Cx), this protein is Proline--tRNA ligase.